Reading from the N-terminus, the 236-residue chain is Probable transcriptional activator protein TraR (236 aa).

The 66-residue stretch at 169-234 folds into the HTH luxR-type domain; sequence VLNPKQMLSP…QLVAIAKDRG (66 aa). The segment at residues 193-212 is a DNA-binding region (H-T-H motif); the sequence is ASVTANLTGINARTVQHYLD.

It belongs to the autoinducer-regulated transcriptional regulatory protein family.

Its function is as follows. Positive regulation of conjugal transfer. TraR activates target genes in the presence of AAI and also activates traR and traI themselves. The sequence is that of Probable transcriptional activator protein TraR (traR) from Sinorhizobium fredii (strain NBRC 101917 / NGR234).